The sequence spans 153 residues: UPF0756 membrane protein Pjdr2_2290 (153 aa).

The next 5 membrane-spanning stretches (helical) occupy residues 6-26 (LILV…IATA), 50-70 (LELG…SGKV), 75-95 (LIAA…AVAA), 111-131 (MVVG…GIPV), and 132-152 (GPLM…LMSG).

This sequence belongs to the UPF0756 family.

It localises to the cell membrane. This is UPF0756 membrane protein Pjdr2_2290 from Paenibacillus sp. (strain JDR-2).